We begin with the raw amino-acid sequence, 201 residues long: UPF0323 lipoprotein Cj0371 (201 aa).

A signal peptide spans 1–26 (MKKIKKIIQIGMIGGLAAVAGGALAG). The N-palmitoyl cysteine moiety is linked to residue Cys27. Cys27 is lipidated: S-diacylglycerol cysteine. The tract at residues 169–201 (NKAGTTSSASSAKKSGFFGGGSKATSSSSSFGS) is disordered. 2 stretches are compositionally biased toward low complexity: residues 170–184 (KAGTTSSASSAKKSG) and 191–201 (KATSSSSSFGS).

This sequence belongs to the UPF0323 family.

The protein localises to the cell membrane. This Campylobacter jejuni subsp. jejuni serotype O:2 (strain ATCC 700819 / NCTC 11168) protein is UPF0323 lipoprotein Cj0371.